We begin with the raw amino-acid sequence, 370 residues long: Flagellar P-ring protein (370 aa).

The first 24 residues, 1–24 (MTLSKWILSFGLSVCLIVSHPVSA), serve as a signal peptide directing secretion.

It belongs to the FlgI family. As to quaternary structure, the basal body constitutes a major portion of the flagellar organelle and consists of four rings (L,P,S, and M) mounted on a central rod.

Its subcellular location is the periplasm. It localises to the bacterial flagellum basal body. In terms of biological role, assembles around the rod to form the L-ring and probably protects the motor/basal body from shearing forces during rotation. The protein is Flagellar P-ring protein of Nitrosomonas europaea (strain ATCC 19718 / CIP 103999 / KCTC 2705 / NBRC 14298).